The sequence spans 721 residues: Protein quick-to-court (721 aa).

5 disordered regions span residues 1 to 42 (MMTS…RIPH), 143 to 210 (VGNS…ASVA), 360 to 379 (SSPE…EAEL), 393 to 428 (DEGN…MQSS), and 441 to 471 (SSVH…CGAG). Basic and acidic residues predominate over residues 17-31 (QVQREKDNDSAEDSH). Residues 161–201 (NGGSDISSSGTSSSSSNNKESSPRTTRTPRTPQTPQTPQTP) are compositionally biased toward low complexity. Residues 362 to 379 (PEERSASSDAVTVREAEL) show a composition bias toward basic and acidic residues. Positions 406–420 (RQQQQQANHSLQAMQ) are enriched in low complexity. Over residues 441–454 (SSVHSKDSQTQSEA) the composition is skewed to polar residues. A coiled-coil region spans residues 511–569 (KRSHNDKVEALLQKLAECNTRYSDMVPDYEQAKQRIRELEKQLEDLQRKLIEHEEKQNK). Residues 668–716 (HVDPEVTLQFLKSAIFYFLTDKENSQGHLQAIESILEFTDAEKQKISAA) enclose the GRIP domain.

As to expression, expressed in the third antennal segment and the maxillary palp, with increased expression near the cuticle of both olfactory organs. Also detected in the second antenna segment. In the brain, expressed in the central nervous system, with high levels of expression in the visual system including the retina and optic lobe, and uniform expression in the cortex. Detected in the thorax and abdomen, with increased expression in the ventral ganglion. In males, detected in the reproductive tract including the ejaculatory bulb and testis.

Its function is as follows. In adult males, modulates sexual behavior by playing a role in sex discrimination and maintaining normal levels of sexual activity towards both males and females. This is Protein quick-to-court from Drosophila melanogaster (Fruit fly).